The sequence spans 255 residues: 4-hydroxy-tetrahydrodipicolinate reductase (255 aa).

Residues 9 to 14, aspartate 35, 89 to 91, and 115 to 118 each bind NAD(+); these read GFKGKM, GTT, and APNF. The Proton donor/acceptor role is filled by histidine 145. Histidine 146 is a (S)-2,3,4,5-tetrahydrodipicolinate binding site. The active-site Proton donor is the lysine 149. 155 to 156 contacts (S)-2,3,4,5-tetrahydrodipicolinate; the sequence is GT.

Belongs to the DapB family.

It localises to the cytoplasm. The enzyme catalyses (S)-2,3,4,5-tetrahydrodipicolinate + NAD(+) + H2O = (2S,4S)-4-hydroxy-2,3,4,5-tetrahydrodipicolinate + NADH + H(+). The catalysed reaction is (S)-2,3,4,5-tetrahydrodipicolinate + NADP(+) + H2O = (2S,4S)-4-hydroxy-2,3,4,5-tetrahydrodipicolinate + NADPH + H(+). Its pathway is amino-acid biosynthesis; L-lysine biosynthesis via DAP pathway; (S)-tetrahydrodipicolinate from L-aspartate: step 4/4. Catalyzes the conversion of 4-hydroxy-tetrahydrodipicolinate (HTPA) to tetrahydrodipicolinate. The sequence is that of 4-hydroxy-tetrahydrodipicolinate reductase from Streptococcus pneumoniae (strain 70585).